Here is a 281-residue protein sequence, read N- to C-terminus: Energy-coupling factor transporter ATP-binding protein EcfA1 (281 aa).

Residues 6–245 (IKSEDLVFKY…VEKIKSIGLD (240 aa)) enclose the ABC transporter domain. An ATP-binding site is contributed by 44–51 (GHNGSGKS).

The protein belongs to the ABC transporter superfamily. Energy-coupling factor EcfA family. As to quaternary structure, forms a stable energy-coupling factor (ECF) transporter complex composed of 2 membrane-embedded substrate-binding proteins (S component), 2 ATP-binding proteins (A component) and 2 transmembrane proteins (T component).

It is found in the cell membrane. ATP-binding (A) component of a common energy-coupling factor (ECF) ABC-transporter complex. Unlike classic ABC transporters this ECF transporter provides the energy necessary to transport a number of different substrates. In Clostridium perfringens (strain ATCC 13124 / DSM 756 / JCM 1290 / NCIMB 6125 / NCTC 8237 / Type A), this protein is Energy-coupling factor transporter ATP-binding protein EcfA1.